We begin with the raw amino-acid sequence, 1349 residues long: Indole-3-acetaldehyde oxidase (1349 aa).

The 2Fe-2S ferredoxin-type domain occupies 7–94 (AAVVLAVNGK…RCSVTTSEGI (88 aa)). Residues cysteine 46, cysteine 51, and cysteine 54 each contribute to the [2Fe-2S] cluster site. Residues 237–415 (VPVSDDGWYR…LSIFIPEWGS (179 aa)) form the FAD-binding PCMH-type domain.

This sequence belongs to the xanthine dehydrogenase family. As to quaternary structure, aldehyde oxidases (AO) are homodimers and heterodimers of AO subunits. The cofactor is [2Fe-2S] cluster. It depends on FAD as a cofactor. Requires Mo-molybdopterin as cofactor. Mostly expressed in coleoptiles, and, to a lower extent, in mesocotyl and roots.

Its subcellular location is the cytoplasm. It catalyses the reaction indole-3-acetaldehyde + O2 + H2O = (indol-3-yl)acetate + H2O2 + H(+). Functionally, in higher plants aldehyde oxidases (AO) appear to be homo- and heterodimeric assemblies of AO subunits with probably different physiological functions. Involved in the biosynthesis of auxin. The chain is Indole-3-acetaldehyde oxidase (AO2) from Zea mays (Maize).